The sequence spans 361 residues: Queuine tRNA-ribosyltransferase (361 aa).

The active-site Proton acceptor is the Asp92. Residues 92-96 (DSGGF), Asp146, Gln189, and Gly216 each bind substrate. The tract at residues 247 to 253 (GVGKPAD) is RNA binding. Residue Asp266 is the Nucleophile of the active site. The interval 271–275 (TRSGR) is RNA binding; important for wobble base 34 recognition. Positions 304, 306, 309, and 335 each coordinate Zn(2+).

Belongs to the queuine tRNA-ribosyltransferase family. In terms of assembly, homodimer. Within each dimer, one monomer is responsible for RNA recognition and catalysis, while the other monomer binds to the replacement base PreQ1. It depends on Zn(2+) as a cofactor.

It catalyses the reaction 7-aminomethyl-7-carbaguanine + guanosine(34) in tRNA = 7-aminomethyl-7-carbaguanosine(34) in tRNA + guanine. It functions in the pathway tRNA modification; tRNA-queuosine biosynthesis. Its function is as follows. Catalyzes the base-exchange of a guanine (G) residue with the queuine precursor 7-aminomethyl-7-deazaguanine (PreQ1) at position 34 (anticodon wobble position) in tRNAs with GU(N) anticodons (tRNA-Asp, -Asn, -His and -Tyr). Catalysis occurs through a double-displacement mechanism. The nucleophile active site attacks the C1' of nucleotide 34 to detach the guanine base from the RNA, forming a covalent enzyme-RNA intermediate. The proton acceptor active site deprotonates the incoming PreQ1, allowing a nucleophilic attack on the C1' of the ribose to form the product. After dissociation, two additional enzymatic reactions on the tRNA convert PreQ1 to queuine (Q), resulting in the hypermodified nucleoside queuosine (7-(((4,5-cis-dihydroxy-2-cyclopenten-1-yl)amino)methyl)-7-deazaguanosine). The sequence is that of Queuine tRNA-ribosyltransferase from Rickettsia rickettsii (strain Iowa).